A 499-amino-acid polypeptide reads, in one-letter code: Zinc finger protein PLAG1 (499 aa).

A disordered region spans residues 1–33 (MATVIPGDLSEVRDTQKAPSGKRKRGESKPRKN). An interaction with KPNA2 region spans residues 2–84 (ATVIPGDLSE…SKYKLQRHMA (83 aa)). The short motif at 22–25 (KRKR) is the Nuclear localization signal element. C2H2-type zinc fingers lie at residues 34–56 (FPCQLCDKAFNSVEKLKVHSFSH), 62–86 (YKCTHQDCTKAFVSKYKLQRHMATH), 92–114 (HKCNYCEKMFHRKDHLKNHLHTH), 121–143 (FKCEECGKSYNTKLGFKRHLALH), 150–172 (LTCKVCLQNFESTGVLLEHLKSH), 185–207 (HQCEHCERRFYTRKDVRRHMVVH), and 213–236 (FLCQYCAQRFGRKDHLTRHMKKSH). The interval 41–242 (KAFNSVEKLK…KKSHNQELLK (202 aa)) is decreased nuclear import with localization in the nucleus but also in the cytoplasm. The interval 243–383 (VKTEPVDFLD…SPASSSKLGL (141 aa)) is repression domain; contains 3 sumoylation motifs and massively decrease transcription activity. The interval 243 to 499 (VKTEPVDFLD…TLPRFHQAFQ (257 aa)) is activates transcription; Inhibition of nuclear import due to lack of NLS and KPNA2 interaction. Residues Lys-244 and Lys-263 each participate in a glycyl lysine isopeptide (Lys-Gly) (interchain with G-Cter in SUMO) cross-link. Over residues 365-379 (GGAPSSSQDSPASSS) the composition is skewed to low complexity. The interval 365–400 (GGAPSSSQDSPASSSKLGLEPQSGSPDDGAGDLSLS) is disordered. Residues 384–499 (EPQSGSPDDG…TLPRFHQAFQ (116 aa)) are massively activates transcription.

The protein belongs to the krueppel C2H2-type zinc-finger protein family. Interacts with KPNA2, which escorts protein to the nucleus via interaction with nuclear localization signal. Interacts with E3 SUMO-protein ligase PIAS1, PIAS2 and PIAS4. In terms of processing, sumoylated with SUMO1; which inhibits transcriptional activity, but does not affect nuclear localization. Blockers of sumoylation pathway such as SENP3 and inactive UBE2I increases transcriptional capacity. Sumoylation is increased in the presence of PIAS1. Post-translationally, acetylated by lysine acetyltransferase EP300; which activates transcriptional capacity. Lysine residues that are sumoylated also seem to be target for acetylation. Expressed in heart, spleen, lung, kidney, brain, testis and epididymis but not in salivary glands.

The protein localises to the nucleus. Its function is as follows. Transcription factor whose activation results in up-regulation of target genes, such as IGFII, leading to uncontrolled cell proliferation: when overexpressed in cultured cells, higher proliferation rate and transformation are observed. Other target genes such as CRLF1, CRABP2, CRIP2, PIGF are strongly induced in cells with PLAG1 induction. Proto-oncogene whose ectopic expression can trigger the development of pleomorphic adenomas of the salivary gland and lipoblastomas. Cooperates with CBFB-MYH11. The sequence is that of Zinc finger protein PLAG1 (Plag1) from Mus musculus (Mouse).